We begin with the raw amino-acid sequence, 393 residues long: MTIRNQRFSLLKQPISSTLNQHLVDYPTPSNLSYWWGFGSLAGICLVIQIVTGVFLAMHYTPHVDLAFNSVEHIMRDVEGGWLLRYMHANGASMFFIVVYLHIFRGLYYASYSSPREFVWCLGVVIFLLMIVTAFIGYVLPWGQMSFWGATVITSLASAIPVVGDTIVTWLWGGFSVDNATLNRFFSLHYLLPFILVGASLLHLAALHQYGSNNPLGVHSEMDKIAFYPYFYVKDLVGWVAFAIFFSIWIFYAPNVLGHPDNYIPANPMSTPPHIVPEWYFLPIYAILRSIPDKAGGVAAIALVFICLLALPFFKSMYVRSSSFRPIYQGMFWLLLADCLLLGWIGCQPVEAPFVTIGQISSLVFFLFFAITPILGRVGRGIPNSYTDETDHT.

The Mitochondrial matrix segment spans residues 1-33 (MTIRNQRFSLLKQPISSTLNQHLVDYPTPSNLS). The helical transmembrane segment at 34–57 (YWWGFGSLAGICLVIQIVTGVFLA) threads the bilayer. The Mitochondrial intermembrane segment spans residues 58–80 (MHYTPHVDLAFNSVEHIMRDVEG). Residues 81–108 (GWLLRYMHANGASMFFIVVYLHIFRGLY) form a helical membrane-spanning segment. Heme b-binding residues include His-88 and His-102. Over 109–116 (YASYSSPR) the chain is Mitochondrial matrix. A helical membrane pass occupies residues 117–141 (EFVWCLGVVIFLLMIVTAFIGYVLP). Over 142-178 (WGQMSFWGATVITSLASAIPVVGDTIVTWLWGGFSVD) the chain is Mitochondrial intermembrane. The helical transmembrane segment at 179–210 (NATLNRFFSLHYLLPFILVGASLLHLAALHQY) threads the bilayer. Residues His-189 and His-203 each coordinate heme b. His-208 contacts a ubiquinone. Topologically, residues 211–229 (GSNNPLGVHSEMDKIAFYP) are mitochondrial matrix. The chain crosses the membrane as a helical span at residues 230 to 252 (YFYVKDLVGWVAFAIFFSIWIFY). The Mitochondrial intermembrane segment spans residues 253–293 (APNVLGHPDNYIPANPMSTPPHIVPEWYFLPIYAILRSIPD). Residues 294–314 (KAGGVAAIALVFICLLALPFF) form a helical membrane-spanning segment. Topologically, residues 315 to 325 (KSMYVRSSSFR) are mitochondrial matrix. Residues 326 to 346 (PIYQGMFWLLLADCLLLGWIG) form a helical membrane-spanning segment. The Mitochondrial intermembrane segment spans residues 347–353 (CQPVEAP). Residues 354–370 (FVTIGQISSLVFFLFFA) traverse the membrane as a helical segment. Residues 371–393 (ITPILGRVGRGIPNSYTDETDHT) lie on the Mitochondrial matrix side of the membrane.

This sequence belongs to the cytochrome b family. Component of the ubiquinol-cytochrome c oxidoreductase (cytochrome b-c1 complex, complex III, CIII), a multisubunit enzyme composed of 10 subunits. The complex is composed of 3 respiratory subunits cytochrome b (MT-CYB), cytochrome c1 (CYC1-1 or CYC1-2) and Rieske protein (UCR1-1 or UCR1-2), 2 core protein subunits MPPalpha1 (or MPPalpha2) and MPPB, and 5 low-molecular weight protein subunits QCR7-1 (or QCR7-2), UCRQ-1 (or UCRQ-2), QCR9, UCRY and probably QCR6-1 (or QCR6-2). The complex exists as an obligatory dimer and forms supercomplexes (SCs) in the inner mitochondrial membrane with NADH-ubiquinone oxidoreductase (complex I, CI), resulting in different assemblies (supercomplexes SCI(1)III(2) and SCI(2)III(4)). Heme b serves as cofactor.

It is found in the mitochondrion inner membrane. In terms of biological role, component of the ubiquinol-cytochrome c oxidoreductase, a multisubunit transmembrane complex that is part of the mitochondrial electron transport chain which drives oxidative phosphorylation. The respiratory chain contains 3 multisubunit complexes succinate dehydrogenase (complex II, CII), ubiquinol-cytochrome c oxidoreductase (cytochrome b-c1 complex, complex III, CIII) and cytochrome c oxidase (complex IV, CIV), that cooperate to transfer electrons derived from NADH and succinate to molecular oxygen, creating an electrochemical gradient over the inner membrane that drives transmembrane transport and the ATP synthase. The cytochrome b-c1 complex catalyzes electron transfer from ubiquinol to cytochrome c, linking this redox reaction to translocation of protons across the mitochondrial inner membrane, with protons being carried across the membrane as hydrogens on the quinol. In the process called Q cycle, 2 protons are consumed from the matrix, 4 protons are released into the intermembrane space and 2 electrons are passed to cytochrome c. Cytochrome b is a catalytic core subunit containing 2 b-type hemes BL and BH topographically segregated in the quinone reduction (Qi) and quinol oxidation (Q0) sites on opposite sides of the membrane. The chain is Cytochrome b (MT-CYB) from Arabidopsis thaliana (Mouse-ear cress).